A 534-amino-acid chain; its full sequence is Origin of replication complex subunit 5 (534 aa).

The interval 1 to 36 (MPPKEESSKVTRRSTRSSASVTVENSEPIESHTPTI) is disordered. 83–90 (GGASTGKT) contributes to the ATP binding site. The Nuclear localization signal signature appears at 129–136 (HRKCSLNG). The disordered stretch occupies residues 397 to 428 (MFDSTGGMDNRKRKRKASEKSMEKKEIAEQEA). The span at 414 to 424 (SEKSMEKKEIA) shows a compositional bias: basic and acidic residues.

The protein belongs to the ORC5 family. Component of the origin recognition complex (ORC) composed of at least ORC1 (ORC1A or ORC1B), ORC2, ORC3, ORC4, ORC5 and ORC6. ORC is regulated in a cell-cycle and development dependent manner. It is sequentially assembled at the exit from anaphase of mitosis and disassembled as cells enter S phase. Interacts directly with ORC1A, ORC1B, ORC2, ORC3, ORC4 and ORC6. In terms of tissue distribution, follow a cell-cycle regulation with a peak at the G1/S-phase. Mostly expressed in flower buds and cauline leaves, and, to a lower exent, in roots, leaves and stems. Expressed at low levels ubiquitously.

The protein localises to the nucleus. Functionally, component of the origin recognition complex (ORC) that binds origins of replication. DNA-binding is ATP-dependent. The specific DNA sequences that define origins of replication have not been identified yet. ORC is required to assemble the pre-replication complex necessary to initiate DNA replication. This is Origin of replication complex subunit 5 from Arabidopsis thaliana (Mouse-ear cress).